Reading from the N-terminus, the 183-residue chain is Large ribosomal subunit protein uL5 (183 aa).

The protein belongs to the universal ribosomal protein uL5 family. In terms of assembly, part of the 50S ribosomal subunit; part of the 5S rRNA/L5/L18/L25 subcomplex. Contacts the 5S rRNA and the P site tRNA. Forms a bridge to the 30S subunit in the 70S ribosome.

This is one of the proteins that bind and probably mediate the attachment of the 5S RNA into the large ribosomal subunit, where it forms part of the central protuberance. In the 70S ribosome it contacts protein S13 of the 30S subunit (bridge B1b), connecting the 2 subunits; this bridge is implicated in subunit movement. Contacts the P site tRNA; the 5S rRNA and some of its associated proteins might help stabilize positioning of ribosome-bound tRNAs. In Christiangramia forsetii (strain DSM 17595 / CGMCC 1.15422 / KT0803) (Gramella forsetii), this protein is Large ribosomal subunit protein uL5.